Consider the following 188-residue polypeptide: Elongation factor P (188 aa).

An N6-(3,6-diaminohexanoyl)-5-hydroxylysine modification is found at Lys34.

It belongs to the elongation factor P family. May be beta-lysylated on the epsilon-amino group of Lys-34 by the combined action of EpmA and EpmB, and then hydroxylated on the C5 position of the same residue by EpmC (if this protein is present). Lysylation is critical for the stimulatory effect of EF-P on peptide-bond formation. The lysylation moiety may extend toward the peptidyltransferase center and stabilize the terminal 3-CCA end of the tRNA. Hydroxylation of the C5 position on Lys-34 may allow additional potential stabilizing hydrogen-bond interactions with the P-tRNA.

It localises to the cytoplasm. The protein operates within protein biosynthesis; polypeptide chain elongation. In terms of biological role, involved in peptide bond synthesis. Alleviates ribosome stalling that occurs when 3 or more consecutive Pro residues or the sequence PPG is present in a protein, possibly by augmenting the peptidyl transferase activity of the ribosome. Modification of Lys-34 is required for alleviation. This is Elongation factor P from Pectobacterium carotovorum subsp. carotovorum (strain PC1).